Reading from the N-terminus, the 501-residue chain is Dipeptide and tripeptide permease A (501 aa).

At 1-34 (MSTANNKPTESVSLNAFKQPKSFYLIFSIELWER) the chain is on the cytoplasmic side. A helical transmembrane segment spans residues 35–55 (FGYYGLQGIMAVYLVKQLGMS). The Periplasmic segment spans residues 56 to 59 (EADS). The helical transmembrane segment at 60–80 (ITLFSSFSALVYGLVAIGGWL) threads the bilayer. Residues 81 to 89 (GDKVLGTKR) are Cytoplasmic-facing. Residues 90-110 (VIMLGAIVLAIGYGLVAWSGH) traverse the membrane as a helical segment. A topological domain (periplasmic) is located at residue Asp-111. The helical transmembrane segment at 112 to 132 (VAIVYMGMATIAVGNGLFKAN) threads the bilayer. The Cytoplasmic portion of the chain corresponds to 133-153 (PSSLLSTCYAKDDPRLDGAFT). A helical transmembrane segment spans residues 154–174 (MYYMSINIGSFFSMLATPWLA). The Periplasmic segment spans residues 175 to 178 (AKFG). A helical transmembrane segment spans residues 179-199 (WSVAFALSFVGMLITVVNFLF). Over 200–217 (CRSWVKDYGSKPDFEAVH) the chain is Cytoplasmic. Residues 218–238 (FGKLLATIAGVIVLIAIATWL) form a helical membrane-spanning segment. The Periplasmic segment spans residues 239–246 (LHNQGIAR). Residues 247–267 (MVLGVIALGIVIIFGKEAFAM) traverse the membrane as a helical segment. Topologically, residues 268-274 (QGAARRK) are cytoplasmic. Residues 275–295 (MIVAFILMLEAIIFFVLYSQM) traverse the membrane as a helical segment. Residues 296-320 (PTSLNFFAIRNVEHTILGIAVEPEQ) are Periplasmic-facing. A helical transmembrane segment spans residues 321-341 (YQALNPFWIIIGSPILAAIYN). Over 342–352 (KMGDTLPMPTK) the chain is Cytoplasmic. Residues 353–373 (FAIGMVLCSGAFLVLPLGAKF) form a helical membrane-spanning segment. The Periplasmic portion of the chain corresponds to 374-383 (ATDAGIVSVN). Residues 384–404 (WLILSYGLQSIGELMISGLGL) form a helical membrane-spanning segment. At 405 to 414 (AMVAQLVPQR) the chain is on the cytoplasmic side. Residues 415–435 (LMGFIMGSWFLTTAGANLIGG) traverse the membrane as a helical segment. Over 436 to 459 (YVAGMMAVPENVTDPLMSLEVYGR) the chain is Periplasmic. The chain crosses the membrane as a helical span at residues 460-480 (VFLQIGVATAVIAALMLITAP). Residues 481–501 (KLNRMTQDDEENAKAAKTATA) lie on the Cytoplasmic side of the membrane.

It belongs to the major facilitator superfamily. Proton-dependent oligopeptide transporter (POT/PTR) (TC 2.A.17) family. DtpA subfamily.

It localises to the cell inner membrane. In terms of biological role, proton-dependent permease that transports di- and tripeptides. This chain is Dipeptide and tripeptide permease A, found in Citrobacter koseri (strain ATCC BAA-895 / CDC 4225-83 / SGSC4696).